The chain runs to 93 residues: Cell division protein CrgA (93 aa).

2 consecutive transmembrane segments (helical) span residues 31–51 and 70–90; these read VWFV…LMVF and LGPW…LLTM.

Belongs to the CrgA family.

It localises to the cell membrane. In terms of biological role, involved in cell division. This is Cell division protein CrgA from Mycobacterium leprae (strain Br4923).